The chain runs to 386 residues: N-acetylneuraminate epimerase (386 aa).

The signal sequence occupies residues 1-29 (MGMQMKNFKKMMTLMALCLSVAITTSGYA). Kelch repeat units lie at residues 51–95 (VIYV…VFLN), 97–149 (ELYV…VKLN), 151–186 (TMVLITGGVNEHIFDKYFIDIAAAAADESEKNKVIY), 187–232 (NYFN…VMEN), 235–284 (LMLI…LAGA), 306–355 (QNYT…SYGD), and 357–386 (VFLIGGENAKGKPVSSVTSFTMRDGNLLIK). Residue Glu-241 is the Proton acceptor of the active site.

It belongs to the NanM family. Homodimer.

It localises to the periplasm. It catalyses the reaction N-acetyl-alpha-neuraminate = N-acetyl-beta-neuraminate. Its function is as follows. Converts alpha-N-acetylneuranimic acid (Neu5Ac) to the beta-anomer, accelerating the equilibrium between the alpha- and beta-anomers. Probably facilitates sialidase-negative bacteria to compete successfully for limited amounts of extracellular Neu5Ac, which is likely taken up in the beta-anomer. In addition, the rapid removal of sialic acid from solution might be advantageous to the bacterium to damp down host responses. This is N-acetylneuraminate epimerase from Salmonella choleraesuis (strain SC-B67).